A 311-amino-acid polypeptide reads, in one-letter code: Methionyl-tRNA formyltransferase (311 aa).

Residue 110–113 (SLLP) participates in (6S)-5,6,7,8-tetrahydrofolate binding.

It belongs to the Fmt family.

The catalysed reaction is L-methionyl-tRNA(fMet) + (6R)-10-formyltetrahydrofolate = N-formyl-L-methionyl-tRNA(fMet) + (6S)-5,6,7,8-tetrahydrofolate + H(+). Attaches a formyl group to the free amino group of methionyl-tRNA(fMet). The formyl group appears to play a dual role in the initiator identity of N-formylmethionyl-tRNA by promoting its recognition by IF2 and preventing the misappropriation of this tRNA by the elongation apparatus. The chain is Methionyl-tRNA formyltransferase from Streptococcus pyogenes serotype M6 (strain ATCC BAA-946 / MGAS10394).